The primary structure comprises 177 residues: Peptide methionine sulfoxide reductase MsrA (177 aa).

Cys12 is a catalytic residue.

Belongs to the MsrA Met sulfoxide reductase family.

It catalyses the reaction L-methionyl-[protein] + [thioredoxin]-disulfide + H2O = L-methionyl-(S)-S-oxide-[protein] + [thioredoxin]-dithiol. It carries out the reaction [thioredoxin]-disulfide + L-methionine + H2O = L-methionine (S)-S-oxide + [thioredoxin]-dithiol. Functionally, has an important function as a repair enzyme for proteins that have been inactivated by oxidation. Catalyzes the reversible oxidation-reduction of methionine sulfoxide in proteins to methionine. The protein is Peptide methionine sulfoxide reductase MsrA of Halobacterium salinarum (strain ATCC 29341 / DSM 671 / R1).